The sequence spans 508 residues: Sugar transport protein 12 (508 aa).

The Cytoplasmic portion of the chain corresponds to 1–22 (MPSVGIVIGDGKKEYPGKLTLY). A run of 12 helical transmembrane segments spans residues 23 to 43 (VTVT…DIGI), 80 to 100 (VSLT…SLVA), 118 to 138 (VLFC…MLIV), 141 to 161 (LLLG…LSEM), 172 to 192 (IGFQ…NFFF), 201 to 221 (LSLG…LILP), 294 to 314 (LTGI…IGFG), 317 to 337 (AALI…VVSI), 347 to 367 (FLFL…AAAI), 383 to 403 (WYAI…AWSW), 426 to 446 (ITVS…LMML), and 451 to 471 (FGLF…VYLF). At 472 to 508 (LPETRGVPIEEMNRVWRSHWYWSKFVDAEKNLTKVVI) the chain is on the cytoplasmic side.

It belongs to the major facilitator superfamily. Sugar transporter (TC 2.A.1.1) family.

Its subcellular location is the membrane. Functionally, mediates an active uptake of hexoses, probably by sugar/hydrogen symport. The chain is Sugar transport protein 12 (STP12) from Arabidopsis thaliana (Mouse-ear cress).